Consider the following 151-residue polypeptide: Transcriptional regulator MraZ (151 aa).

SpoVT-AbrB domains follow at residues Ala-5–Glu-52 and Ala-81–Ala-124.

The protein belongs to the MraZ family. As to quaternary structure, forms oligomers.

It is found in the cytoplasm. The protein localises to the nucleoid. This chain is Transcriptional regulator MraZ, found in Pseudomonas syringae pv. tomato (strain ATCC BAA-871 / DC3000).